A 267-amino-acid chain; its full sequence is Dihydropteroate synthase (267 aa).

The region spanning 1–251 (MTKTKIMGIL…NVELNAKLAK (251 aa)) is the Pterin-binding domain. N11 contributes to the Mg(2+) binding site. (7,8-dihydropterin-6-yl)methyl diphosphate contacts are provided by residues T51, D84, N103, D167, K203, and 239–241 (RVH).

The protein belongs to the DHPS family. In terms of assembly, homodimer. Mg(2+) serves as cofactor.

The catalysed reaction is (7,8-dihydropterin-6-yl)methyl diphosphate + 4-aminobenzoate = 7,8-dihydropteroate + diphosphate. It functions in the pathway cofactor biosynthesis; tetrahydrofolate biosynthesis; 7,8-dihydrofolate from 2-amino-4-hydroxy-6-hydroxymethyl-7,8-dihydropteridine diphosphate and 4-aminobenzoate: step 1/2. Its function is as follows. Catalyzes the condensation of para-aminobenzoate (pABA) with 6-hydroxymethyl-7,8-dihydropterin diphosphate (DHPt-PP) to form 7,8-dihydropteroate (H2Pte), the immediate precursor of folate derivatives. The polypeptide is Dihydropteroate synthase (folP) (Staphylococcus aureus (strain MRSA252)).